The primary structure comprises 336 residues: D-alanine--D-alanine ligase (336 aa).

The ATP-grasp domain maps to 124-330 (KMWFSALGIP…FTEYLSLVIN (207 aa)). 154–209 (ALENWGSIFVKAASQGSSVGCYKVDDSSKVADVLKDAFGYAPYVIVEKTIKARELE) serves as a coordination point for ATP. 3 residues coordinate Mg(2+): Asp284, Glu297, and Asn299.

The protein belongs to the D-alanine--D-alanine ligase family. It depends on Mg(2+) as a cofactor. Mn(2+) serves as cofactor.

It is found in the cytoplasm. It catalyses the reaction 2 D-alanine + ATP = D-alanyl-D-alanine + ADP + phosphate + H(+). It functions in the pathway cell wall biogenesis; peptidoglycan biosynthesis. Its function is as follows. Cell wall formation. In Shewanella sp. (strain ANA-3), this protein is D-alanine--D-alanine ligase.